A 416-amino-acid chain; its full sequence is Multifunctional CCA protein (416 aa).

ATP-binding residues include Gly-8 and Arg-11. Positions 8 and 11 each coordinate CTP. Asp-21 and Asp-23 together coordinate Mg(2+). ATP is bound by residues Arg-91, Arg-138, and Arg-141. Positions 91, 138, and 141 each coordinate CTP. The region spanning 229–331 (TGLHQELVSD…YELLQRCDAF (103 aa)) is the HD domain.

This sequence belongs to the tRNA nucleotidyltransferase/poly(A) polymerase family. Bacterial CCA-adding enzyme type 1 subfamily. In terms of assembly, monomer. Can also form homodimers and oligomers. It depends on Mg(2+) as a cofactor. The cofactor is Ni(2+).

The catalysed reaction is a tRNA precursor + 2 CTP + ATP = a tRNA with a 3' CCA end + 3 diphosphate. The enzyme catalyses a tRNA with a 3' CCA end + 2 CTP + ATP = a tRNA with a 3' CCACCA end + 3 diphosphate. Catalyzes the addition and repair of the essential 3'-terminal CCA sequence in tRNAs without using a nucleic acid template. Adds these three nucleotides in the order of C, C, and A to the tRNA nucleotide-73, using CTP and ATP as substrates and producing inorganic pyrophosphate. tRNA 3'-terminal CCA addition is required both for tRNA processing and repair. Also involved in tRNA surveillance by mediating tandem CCA addition to generate a CCACCA at the 3' terminus of unstable tRNAs. While stable tRNAs receive only 3'-terminal CCA, unstable tRNAs are marked with CCACCA and rapidly degraded. The sequence is that of Multifunctional CCA protein from Xylella fastidiosa (strain 9a5c).